Reading from the N-terminus, the 104-residue chain is U20-lycotoxin-Ls1c (104 aa).

Residues 1–30 (MFSTSDQVSKMNSRILSALLILGIATCVIA) form the signal peptide. The WAP domain maps to 31 to 76 (GGFCPKSRHPQCDLSYKINDCCAQSDCRVGSVCCVEGCGNVCRAES). 5 disulfide bridges follow: Cys-34–Cys-64, Cys-42–Cys-68, Cys-51–Cys-63, Cys-52–Cys-90, and Cys-57–Cys-72.

Belongs to the venom protein 11 family. 02 (wap-2) subfamily. Post-translationally, contains 5 disulfide bonds. As to expression, expressed by the venom gland.

It is found in the secreted. Functionally, has antibacterial activity. The chain is U20-lycotoxin-Ls1c from Lycosa singoriensis (Wolf spider).